An 804-amino-acid polypeptide reads, in one-letter code: Phenylalanine--tRNA ligase beta subunit (804 aa).

The 109-residue stretch at 39-147 folds into the tRNA-binding domain; the sequence is GPSFSNVVVA…PNLPLGEDLA (109 aa). The B5 domain maps to 402 to 480; the sequence is ETVGEIHLRC…RIHGYDNIPV (79 aa). Aspartate 458, aspartate 464, glutamate 467, and glutamate 468 together coordinate Mg(2+). The region spanning 711–804 is the FDX-ACB domain; that stretch reads SRYPESSRDV…IIDQTGARVR (94 aa).

This sequence belongs to the phenylalanyl-tRNA synthetase beta subunit family. Type 1 subfamily. As to quaternary structure, tetramer of two alpha and two beta subunits. The cofactor is Mg(2+).

Its subcellular location is the cytoplasm. It catalyses the reaction tRNA(Phe) + L-phenylalanine + ATP = L-phenylalanyl-tRNA(Phe) + AMP + diphosphate + H(+). The chain is Phenylalanine--tRNA ligase beta subunit from Syntrophus aciditrophicus (strain SB).